The chain runs to 113 residues: UPF0122 protein M6_Spy0905 (113 aa).

The protein belongs to the UPF0122 family.

Might take part in the signal recognition particle (SRP) pathway. This is inferred from the conservation of its genetic proximity to ftsY/ffh. May be a regulatory protein. The sequence is that of UPF0122 protein M6_Spy0905 from Streptococcus pyogenes serotype M6 (strain ATCC BAA-946 / MGAS10394).